Consider the following 124-residue polypeptide: Fluoride-specific ion channel FluC (124 aa).

A run of 4 helical transmembrane segments spans residues 4 to 24 (IFYIALGGGLGSVLRYLTTLV), 35 to 55 (YATFVTNIAGCLLIGLFFGYL), 63 to 83 (PYLKFFLITGLCGGYTTFSAF), and 96 to 116 (ILIAFLYISLSVFLGLMATWT). Na(+) contacts are provided by Gly75 and Thr78.

This sequence belongs to the fluoride channel Fluc/FEX (TC 1.A.43) family.

The protein localises to the cell inner membrane. The catalysed reaction is fluoride(in) = fluoride(out). Na(+) is not transported, but it plays an essential structural role and its presence is essential for fluoride channel function. Functionally, fluoride-specific ion channel. Important for reducing fluoride concentration in the cell, thus reducing its toxicity. The sequence is that of Fluoride-specific ion channel FluC from Flavobacterium psychrophilum (strain ATCC 49511 / DSM 21280 / CIP 103535 / JIP02/86).